The sequence spans 396 residues: MFENVVGLIVEYNPFHNGHLHHIQEIDRLFEDNIKIAVMSGDYVQRGEPSLINKLEKTKIALSQGIDIVIELPTFYSTQSAEIFAKGSVNLLNKLSCSHIVFGSESNDLDKLKRIATISLTKEFELSLREFLAEGFSYPTAFSKVLFDEKLGSNDILALEYLRAIKTINSKIEAYCIKREKTGYYDDEKDNFSSATYIRKILLDSNEKKENKLNKIKNLVPEFSYKILEENFGVFSCLSDFYDLIKYNIIKNCSELKNIQDLEIGLENRLYKYSLENLKFEDFFNEVLTKRITISRLQRILLHSLFNLTENITEKVKNEVPFVKILGFSTKGQKYLNYLKKSKNYNERKILTSNRNLKEILNEEEAKLFNFNELCSQIYRIKSSYINIGYPIIKKD.

ATP-binding positions include 9 to 22, G103, N154, and R179; that span reads IVEY…HLHH.

Belongs to the TmcAL family.

It localises to the cytoplasm. The enzyme catalyses cytidine(34) in elongator tRNA(Met) + acetate + ATP = N(4)-acetylcytidine(34) in elongator tRNA(Met) + AMP + diphosphate. Its function is as follows. Catalyzes the formation of N(4)-acetylcytidine (ac(4)C) at the wobble position of elongator tRNA(Met), using acetate and ATP as substrates. First activates an acetate ion to form acetyladenylate (Ac-AMP) and then transfers the acetyl group to tRNA to form ac(4)C34. The protein is tRNA(Met) cytidine acetate ligase of Fusobacterium nucleatum subsp. nucleatum (strain ATCC 25586 / DSM 15643 / BCRC 10681 / CIP 101130 / JCM 8532 / KCTC 2640 / LMG 13131 / VPI 4355).